A 430-amino-acid polypeptide reads, in one-letter code: BSD domain-containing protein 1 (430 aa).

Phosphoserine is present on residues Ser-92 and Ser-166. In terms of domain architecture, BSD spans 146-198 (WLSQFCLEEKKGEISELLVGSPSIRALYTKMVPAAVSHSEFWHRYFYKVHQLE). 2 disordered regions span residues 247 to 298 (STFP…APEA) and 319 to 398 (LAVD…WEKD). Polar residues predominate over residues 276 to 291 (PSESSESISLVTQIAN). Residues 350 to 367 (PPARVETLREEAPTDLRV) are compositionally biased toward basic and acidic residues. Thr-356 is modified (phosphothreonine). The span at 371–390 (NSDSGKSTPSNNGKKGSSTD) shows a compositional bias: polar residues. Residues Ser-387, Ser-388, and Ser-418 each carry the phosphoserine modification.

The chain is BSD domain-containing protein 1 (BSDC1) from Homo sapiens (Human).